The sequence spans 220 residues: ATP-dependent Clp protease proteolytic subunit (220 aa).

S125 functions as the Nucleophile in the catalytic mechanism. H150 is an active-site residue.

Belongs to the peptidase S14 family. As to quaternary structure, fourteen ClpP subunits assemble into 2 heptameric rings which stack back to back to give a disk-like structure with a central cavity, resembling the structure of eukaryotic proteasomes.

It is found in the cytoplasm. The catalysed reaction is Hydrolysis of proteins to small peptides in the presence of ATP and magnesium. alpha-casein is the usual test substrate. In the absence of ATP, only oligopeptides shorter than five residues are hydrolyzed (such as succinyl-Leu-Tyr-|-NHMec, and Leu-Tyr-Leu-|-Tyr-Trp, in which cleavage of the -Tyr-|-Leu- and -Tyr-|-Trp bonds also occurs).. Its function is as follows. Cleaves peptides in various proteins in a process that requires ATP hydrolysis. Has a chymotrypsin-like activity. Plays a major role in the degradation of misfolded proteins. This Bacteroides thetaiotaomicron (strain ATCC 29148 / DSM 2079 / JCM 5827 / CCUG 10774 / NCTC 10582 / VPI-5482 / E50) protein is ATP-dependent Clp protease proteolytic subunit.